The chain runs to 233 residues: GSK-3-binding protein FRAT2 (233 aa).

A disordered region spans residues 1-24 (MPCRREEEEEAGEEAEGEEEEDDS). Over residues 7–24 (EEEEAGEEAEGEEEEDDS) the composition is skewed to acidic residues. The involved in GSK-3 binding stretch occupies residues 174–196 (DPHRLLQQLVLSGNLIKEAVRRL). The segment at 204-233 (AATGPASAPGPGGGRSGPDRIALQPSGSLL) is disordered.

Belongs to the GSK-3-binding protein family. As to quaternary structure, binds GSK-3 and prevents GSK-3-dependent phosphorylation.

In terms of biological role, positively regulates the Wnt signaling pathway by stabilizing beta-catenin through the association with GSK-3. This Homo sapiens (Human) protein is GSK-3-binding protein FRAT2 (FRAT2).